The sequence spans 396 residues: Purine ribonucleoside efflux pump NepI (396 aa).

Residues 1-21 (MSEFIAENRGADAITRPNWSA) are Cytoplasmic-facing. The chain crosses the membrane as a helical span at residues 22 to 42 (VFSVAFCVACLIIVEFLPVSL). The Periplasmic portion of the chain corresponds to 43 to 54 (LTPMAQDLGISE). Residues 55–75 (GVAGQSVTVTAFVAMFASLFI) form a helical membrane-spanning segment. Over 76–85 (TQTIQATDRR) the chain is Cytoplasmic. A helical transmembrane segment spans residues 86 to 106 (YVVILFAVLLTLSCLLVSFAN). Residue Ser107 is a topological domain, periplasmic. A helical transmembrane segment spans residues 108–128 (FSLLLIGRACLGLALGGFWAI). Topologically, residues 129-147 (SASLTMRLVPPRTVPKALS) are cytoplasmic. A helical membrane pass occupies residues 148–168 (VIFGAVSIALVIAAPLGGFLG). Residues 169–175 (ELIGWRN) lie on the Periplasmic side of the membrane. A helical transmembrane segment spans residues 176–196 (VFNAAAAMGVLCIFWIIKSLP). Residues 197 to 215 (SLPGEPSHQKQNTFRLLQR) are Cytoplasmic-facing. Residues 216–236 (PGVMAGMIAIFMSFAGQFAFF) traverse the membrane as a helical segment. Over 237-255 (TYIRPVYMNLAGFGVDGLT) the chain is Periplasmic. A helical transmembrane segment spans residues 256-276 (LVLLSFGIASFVGTSLSSFIL). Residues 277-281 (KRSVK) lie on the Cytoplasmic side of the membrane. The chain crosses the membrane as a helical span at residues 282–302 (LALAGAPFVLALSALVLTLWG). The Periplasmic segment spans residues 303 to 305 (SDK). Residues 306-326 (IVATGVAIIWGLTFALIPVGW) form a helical membrane-spanning segment. The Cytoplasmic segment spans residues 327–343 (STWITRSLADQAEKAGS). The chain crosses the membrane as a helical span at residues 344–364 (IQVAVIQLANTCGAAIGGYAL). The Periplasmic portion of the chain corresponds to 365–366 (DN). Residues 367-387 (IGLTSPLMLSGTLMLLTALLV) traverse the membrane as a helical segment. At 388 to 396 (TAKVKMKKS) the chain is on the cytoplasmic side.

The protein belongs to the major facilitator superfamily. DHA1 family. NepI (TC 2.A.1.2.26) subfamily.

The protein localises to the cell inner membrane. It catalyses the reaction inosine(in) + H(+)(out) = inosine(out) + H(+)(in). It carries out the reaction guanosine(in) + H(+)(out) = guanosine(out) + H(+)(in). Its function is as follows. Involved in the efflux of purine ribonucleosides, such as inosine and guanosine. In Escherichia coli O127:H6 (strain E2348/69 / EPEC), this protein is Purine ribonucleoside efflux pump NepI.